Reading from the N-terminus, the 217-residue chain is Ribonuclease HII (217 aa).

Residues 34-217 form the RNase H type-2 domain; the sequence is WPVAGTDEAG…RMSFRPLKRD (184 aa). A divalent metal cation is bound by residues D40, E41, and D131.

It belongs to the RNase HII family. Mn(2+) is required as a cofactor. The cofactor is Mg(2+).

The protein resides in the cytoplasm. It catalyses the reaction Endonucleolytic cleavage to 5'-phosphomonoester.. Endonuclease that specifically degrades the RNA of RNA-DNA hybrids. This chain is Ribonuclease HII, found in Agrobacterium fabrum (strain C58 / ATCC 33970) (Agrobacterium tumefaciens (strain C58)).